A 1097-amino-acid polypeptide reads, in one-letter code: RE1-silencing transcription factor (1097 aa).

An interaction with SIN3A region spans residues 32–122 (DLHDLSKAEL…SLELSVVEPQ (91 aa)). The interaction with SIN3B stretch occupies residues 43–57 (APQLIMLANVALTGE). 2 disordered regions span residues 83–103 (NFSD…KGEP) and 127–159 (ASGA…TKPF). The segment covering 86-96 (DSEEGEGLEES) has biased composition (acidic residues). The segment at 145–418 (PGAEDKGKSS…KSKHPTCPNK (274 aa)) is interaction with ZFP90. The C2H2-type 1 zinc finger occupies 159–181 (FRCKPCQYEAESEEQFVHHIRVH). Residues 201–212 (SGSSTAEEGDFS) are required for binding to the neuron-restrictive silencer element. 7 consecutive C2H2-type zinc fingers follow at residues 216-238 (IRCD…LKHH), 248-270 (YKCI…LRNH), 276-298 (YTCG…VRTH), 304-326 (YKCE…MRTH), 332-355 (FKCD…RQVH), 361-383 (LNCP…VELH), and 389-412 (FNCP…KSKH). Residues 452-479 (KIKGDVAGKKNEKSVKAEKRDVSKEKKP) show a composition bias toward basic and acidic residues. 4 disordered regions span residues 452–642 (KIKG…MEGA), 774–837 (KEPV…EQVL), 853–938 (ESVS…NGKH), and 961–1049 (GINS…NAKE). Over residues 480–490 (SNNVSVIQVTT) the composition is skewed to polar residues. 2 stretches are compositionally biased toward basic and acidic residues: residues 495–504 (SVTEVKEMDV) and 559–570 (PKGDSKVEENKK). A compositionally biased stretch (basic residues) spans 577–593 (KSTKKKTLKNKSSKKSS). Over residues 803-836 (PPLHMEPISKKPPLRKDKKEKSNMQSERARKEQV) the composition is skewed to basic and acidic residues. Ser-864 is modified (phosphoserine). A compositionally biased stretch (polar residues) spans 913-930 (INESTHISSSGQNLNTPE). Ser-971 bears the Phosphoserine mark. An interaction with RCOR1 region spans residues 1009-1087 (EGIHSHEGSD…HLNRHLVNVY (79 aa)). The C2H2-type 9 zinc finger occupies 1060–1082 (FVCIFCDRSFRKGKDYSKHLNRH).

In terms of assembly, isoform 1 and isoform 3 form heterodimers. Isoform 3: Forms homodimers and homooligomers; binds to the neuron-restrictive silencer element (NRSE) as monomer. Interacts with SIN3A, SIN3B and RCOR1. Interacts with CDYL. Interacts with EHMT1 and EHMT2 only in the presence of CDYL. Part of a complex containing at least CDYL, REST, WIZ, SETB1, EHMT1 and EHMT2. Interacts (via zinc-finger DNA-binding domain) with ZFP90 (via N- and C-termini); the interaction inhibits REST repressor activity. Interacts (via C2H2-type zinc finger 5) with PRICKLE1. Interacts with FBXW11 and BTRC. Interacts with USP7. O-glycosylated. Post-translationally, phosphorylated; phosphorylation is required for ubiquitination. In terms of processing, ubiquitinated; ubiquitination is mediated by BTRC and leads to proteasomal degradation in G2 phase. Ubiquitination increases during neuronal differentiation. Deubiquitinated by USP7; leading to its stabilization and promoting the maintenance of neural progenitor cells. Expressed in neurons of the prefrontal cortex, in hippocampal pyramidal neurons, dentate gyrus granule neurons and cerebellar Purkinje and granule neurons (at protein level). Expressed in dopaminergic neurons of the substantia nigra (at protein level). Expressed in neural progenitor cells (at protein level). In patients suffering from Alzheimer disease, frontotemporal dementia or dementia with Lewy bodies, decreased nuclear levels have been observed in neurons of the prefrontal cortex and the hippocampus, but not in neurons of the dentate gyrus and cerebellum (at protein level). In patients with Parkinson disease or dementia with Lewy bodies, decreased nuclear levels have been observed in dopaminergic neurons and in cortical neurons and localization to Lewy bodies and pale bodies was detected (at protein level). Expressed at higher levels in weakly invasive breast cancer cell lines and at lower levels in highly invasive breast cancer lines (at protein level). Ubiquitous. Expressed at higher levels in the tissues of the lymphocytic compartment, including spleen, thymus, peripheral blood lymphocytes and ovary.

It is found in the nucleus. The protein resides in the cytoplasm. Its function is as follows. Transcriptional repressor which binds neuron-restrictive silencer element (NRSE) and represses neuronal gene transcription in non-neuronal cells. Restricts the expression of neuronal genes by associating with two distinct corepressors, SIN3A and RCOR1, which in turn recruit histone deacetylase to the promoters of REST-regulated genes. Mediates repression by recruiting the BHC complex at RE1/NRSE sites which acts by deacetylating and demethylating specific sites on histones, thereby acting as a chromatin modifier. Transcriptional repression by REST-CDYL via the recruitment of histone methyltransferase EHMT2 may be important in transformation suppression. Represses the expression of SRRM4 in non-neural cells to prevent the activation of neural-specific splicing events and to prevent production of REST isoform 3. Repressor activity may be inhibited by forming heterodimers with isoform 3, thereby preventing binding to NRSE or binding to corepressors and leading to derepression of target genes. Also maintains repression of neuronal genes in neural stem cells, and allows transcription and differentiation into neurons by dissociation from RE1/NRSE sites of target genes. Thereby is involved in maintaining the quiescent state of adult neural stem cells and preventing premature differentiation into mature neurons. Plays a role in the developmental switch in synaptic NMDA receptor composition during postnatal development, by repressing GRIN2B expression and thereby altering NMDA receptor properties from containing primarily GRIN2B to primarily GRIN2A subunits. Acts as a regulator of osteoblast differentiation. Key repressor of gene expression in hypoxia; represses genes in hypoxia by direct binding to an RE1/NRSE site on their promoter regions. May also function in stress resistance in the brain during aging; possibly by regulating expression of genes involved in cell death and in the stress response. Repressor of gene expression in the hippocampus after ischemia by directly binding to RE1/NRSE sites and recruiting SIN3A and RCOR1 to promoters of target genes, thereby promoting changes in chromatin modifications and ischemia-induced cell death. After ischemia, might play a role in repression of miR-132 expression in hippocampal neurons, thereby leading to neuronal cell death. Negatively regulates the expression of SRRM3 in breast cancer cell lines. Functionally, binds to the 3' region of the neuron-restrictive silencer element (NRSE), with lower affinity than full-length REST isoform 1. Exhibits weaker repressor activity compared to isoform 1. May negatively regulate the repressor activity of isoform 1 by binding to isoform 1, thereby preventing its binding to NRSE and leading to derepression of target genes. However, in another study, does not appear to be implicated in repressor activity of a NRSE motif-containing reporter construct nor in inhibitory activity on the isoform 1 transcriptional repressor activity. Post-transcriptional inactivation of REST by SRRM4-dependent alternative splicing into isoform 3 is required in mechanosensory hair cells in the inner ear for derepression of neuronal genes and hearing. The protein is RE1-silencing transcription factor (REST) of Homo sapiens (Human).